The primary structure comprises 147 residues: Large ribosomal subunit protein uL13 (147 aa).

The protein belongs to the universal ribosomal protein uL13 family. Part of the 50S ribosomal subunit.

In terms of biological role, this protein is one of the early assembly proteins of the 50S ribosomal subunit, although it is not seen to bind rRNA by itself. It is important during the early stages of 50S assembly. The polypeptide is Large ribosomal subunit protein uL13 (Lactiplantibacillus plantarum (strain ATCC BAA-793 / NCIMB 8826 / WCFS1) (Lactobacillus plantarum)).